A 462-amino-acid polypeptide reads, in one-letter code: GTPase Der (462 aa).

EngA-type G domains follow at residues 2-164 and 198-369; these read QKVI…EEKV and IRVG…KNYT. GTP-binding positions include 8-15, 55-59, 116-119, 204-211, 251-255, and 315-318; these read GKPNVGKS, DSGGL, NKID, GRVNVGKS, DTAGI, and NKWD. The region spanning 370-454 is the KH-like domain; the sequence is QKIQTSKLNE…PIVLIPKKRG (85 aa).

This sequence belongs to the TRAFAC class TrmE-Era-EngA-EngB-Septin-like GTPase superfamily. EngA (Der) GTPase family. As to quaternary structure, associates with the 50S ribosomal subunit.

Functionally, GTPase that plays an essential role in the late steps of ribosome biogenesis. The protein is GTPase Der of Campylobacter concisus (strain 13826).